The following is a 521-amino-acid chain: Occludin (521 aa).

Over Met1 to Arg66 the chain is Cytoplasmic. One can recognise an MARVEL domain in the interval Ser60 to Arg268. A helical membrane pass occupies residues Ile67 to Trp89. The Extracellular portion of the chain corresponds to Asp90–Arg134. Residues Ala135 to Val159 traverse the membrane as a helical segment. Topologically, residues Ile160 to Arg169 are cytoplasmic. The helical transmembrane segment at Tyr170 to Met194 threads the bilayer. Topologically, residues Gly195–Glu242 are extracellular. Cysteines 215 and 236 form a disulfide. Residues Ala243–Val264 form a helical membrane-spanning segment. Topologically, residues Lys265–Thr521 are cytoplasmic. Ser301 carries the post-translational modification Phosphoserine. The disordered stretch occupies residues Ser301–Ser407. The residue at position 304 (Thr304) is a Phosphothreonine. Ser312, Ser320, and Ser339 each carry phosphoserine. A Phosphotyrosine modification is found at Tyr367. Ser368 and Ser369 each carry phosphoserine. Residues Ala380–Pro389 are compositionally biased toward basic residues. Residues Lys390–Thr399 show a composition bias toward basic and acidic residues. Phosphotyrosine occurs at positions 397 and 401. A phosphothreonine; by PKC/PRKCH mark is found at Thr402 and Thr403. A Phosphoserine modification is found at Ser407. The OCEL domain occupies Glu413–Thr521. Residues Ser424 to Gly488 are a coiled coil. Ser489 is modified (phosphoserine).

This sequence belongs to the ELL/occludin family. Interacts with TJP1/ZO1. Interacts with VAPA. Interacts with CLDN1, CLDN6, CLDN9, CLDN11, CLDN12 and CLDN17. Interacts with PLSCR1. Interacts with LSR, ILDR1 and ILDR2. Interacts with TJP2/ZO2. In terms of processing, dephosphorylated by PTPRJ. Less-phosphorylated forms are found in basolateral membrane, cytosol and tight junction. More-heavily phosphorylated forms are concentrated exclusively in tight junction. Localized at tight junctions of both epithelial and endothelial cells.

It is found in the cell membrane. The protein localises to the cell junction. It localises to the tight junction. Functionally, may play a role in the formation and regulation of the tight junction (TJ) paracellular permeability barrier. Interacts with ZO-1. The sequence is that of Occludin (OCLN) from Canis lupus familiaris (Dog).